A 466-amino-acid polypeptide reads, in one-letter code: Cysteine--tRNA ligase (466 aa).

Cysteine 28 is a Zn(2+) binding site. Positions 30-40 match the 'HIGH' region motif; sequence PTVYNYIHIGN. 3 residues coordinate Zn(2+): cysteine 208, histidine 233, and glutamate 237. Positions 265 to 269 match the 'KMSKS' region motif; it reads KMSKS. Residue lysine 268 coordinates ATP.

Belongs to the class-I aminoacyl-tRNA synthetase family. Monomer. Requires Zn(2+) as cofactor.

The protein resides in the cytoplasm. The catalysed reaction is tRNA(Cys) + L-cysteine + ATP = L-cysteinyl-tRNA(Cys) + AMP + diphosphate. In Staphylococcus aureus (strain MSSA476), this protein is Cysteine--tRNA ligase.